An 87-amino-acid chain; its full sequence is Small ribosomal subunit protein bS18 (87 aa).

Positions 1 to 10 (MAGKSSGDRR) are enriched in basic and acidic residues. Positions 1 to 23 (MAGKSSGDRRKLLRGAKVGKNAA) are disordered.

It belongs to the bacterial ribosomal protein bS18 family. In terms of assembly, part of the 30S ribosomal subunit. Forms a tight heterodimer with protein bS6.

In terms of biological role, binds as a heterodimer with protein bS6 to the central domain of the 16S rRNA, where it helps stabilize the platform of the 30S subunit. In Clavibacter sepedonicus (Clavibacter michiganensis subsp. sepedonicus), this protein is Small ribosomal subunit protein bS18.